A 561-amino-acid chain; its full sequence is Microtubule-associated protein VP6 (561 aa).

As to quaternary structure, interacts with VP2.

It localises to the virion. Its subcellular location is the host cytoplasm. The protein resides in the host cytoskeleton. Its function is as follows. Minor inner capsid component. Displays NTPase and RNA 5'-triphosphatase (RTPase) activities. May function as a cofactor of polymerase VP2. Associates with microtubules and plays a role in the formation, structural organization and morphology of viral inclusions, where the assembly of cores and the replication of viral RNA occur. The sequence is that of Microtubule-associated protein VP6 (S6) from Lymantria dispar cypovirus 1 (isolate Rao) (LdCPV-1).